Reading from the N-terminus, the 80-residue chain is Conotoxin Ca11.3 (80 aa).

A signal peptide spans 1 to 19; the sequence is MKLVLAIVVILMLLSLSTG. The propeptide occupies 20–42; it reads AEMSDNHASRSATALRDRLLSPK. Disulfide bonds link cysteine 46–cysteine 60, cysteine 53–cysteine 65, cysteine 59–cysteine 72, and cysteine 64–cysteine 79.

The protein belongs to the conotoxin I3 superfamily. Expressed by the venom duct.

Its subcellular location is the secreted. This chain is Conotoxin Ca11.3, found in Conus caracteristicus (Characteristic cone).